The sequence spans 466 residues: Ribulose bisphosphate carboxylase large chain (466 aa).

N6,N6,N6-trimethyllysine is present on K5. The substrate site is built by N114 and T164. The Proton acceptor role is filled by K166. K168 serves as a coordination point for substrate. 3 residues coordinate Mg(2+): K192, D194, and E195. K192 is modified (N6-carboxylysine). H285 serves as the catalytic Proton acceptor. Residues R286, H318, and S370 each contribute to the substrate site.

It belongs to the RuBisCO large chain family. Type I subfamily. In terms of assembly, heterohexadecamer of 8 large chains and 8 small chains; disulfide-linked. The disulfide link is formed within the large subunit homodimers. Mg(2+) serves as cofactor. The disulfide bond which can form in the large chain dimeric partners within the hexadecamer appears to be associated with oxidative stress and protein turnover.

It localises to the plastid. The protein localises to the chloroplast. The enzyme catalyses 2 (2R)-3-phosphoglycerate + 2 H(+) = D-ribulose 1,5-bisphosphate + CO2 + H2O. The catalysed reaction is D-ribulose 1,5-bisphosphate + O2 = 2-phosphoglycolate + (2R)-3-phosphoglycerate + 2 H(+). Its function is as follows. RuBisCO catalyzes two reactions: the carboxylation of D-ribulose 1,5-bisphosphate, the primary event in carbon dioxide fixation, as well as the oxidative fragmentation of the pentose substrate in the photorespiration process. Both reactions occur simultaneously and in competition at the same active site. In Vitis aestivalis (Grape), this protein is Ribulose bisphosphate carboxylase large chain.